A 520-amino-acid chain; its full sequence is Fusaridione A cluster transcription factor fsdR (520 aa).

Residues 1-30 form a disordered region; it reads MSTGPPSGISLVSMTTPRKSGQHTPESWSK.

It is found in the nucleus. Its function is as follows. Transcription factor that regulates the expression of the gene cluster that mediates the biosynthesis of fusaridione A. This chain is Fusaridione A cluster transcription factor fsdR, found in Fusarium heterosporum.